A 515-amino-acid polypeptide reads, in one-letter code: MKKKILLMMSLISVFFAWQLTQAKQVLAEGKVKVVTTFYPVYEFTKGVIGNDGDVFMLMKAGTEPHDFEPSTKDIKKIQDADAFVYMDDNMETWVSDVKKSLTSKKVTIVKGTGNMLLVAGAGHDHHHEDADKKHEHNKHSEEGHNHAFDPHVWLSPYRSITVVENIRDSLSKAYPEKAENFKANAATYIEKLKELDKDYTAALSDAKQKSFVTQHAAFGYMALDYGLNQISINGVTPDAEPSAKRIATLSKYVKKYGIKYIYFEENASSKVAKTLAKEAGVKAAVLSPLEGLTEKEMKAGQDYFTVMRKNLETLRLTTDVAGKEILPEKDTTKTVYNGYFKDKEVKDRQLSDWSGSWQSVYPYLQDGTLDQVWDYKAKKSKGKMTAAEYKDYYTTGYKTDVEQIKINGKKKTMTFVRNGEKKTFTYTYAGKEILTYPKGNRGVRFMFEAKEADAGEFKYVQFSDHAIAPEKAKHFHLYWGGDSQEKLHKELEHWPTYYGSDLSGREIAQEINAH.

The N-terminal stretch at 1-28 (MKKKILLMMSLISVFFAWQLTQAKQVLA) is a signal peptide. A Zn(2+)-binding site is contributed by H66. Residues 125–148 (DHHHEDADKKHEHNKHSEEGHNHA) are disordered. The interval 129-148 (EDADKKHEHNKHSEEGHNHA) is his-rich loop. Residues H152, H216, and E291 each coordinate Zn(2+).

This sequence belongs to the bacterial solute-binding protein 9 family.

Part of the ATP-binding cassette (ABC) transport system AdcABC involved in zinc import. Binds zinc with high affinity and specificity and delivers it to the membrane permease for translocation into the cytoplasm. The polypeptide is Zinc-binding protein AdcA (adcA) (Streptococcus pyogenes serotype M1).